The chain runs to 80 residues: Putative membrane protein insertion efficiency factor (80 aa).

It belongs to the UPF0161 family.

The protein localises to the cell inner membrane. Functionally, could be involved in insertion of integral membrane proteins into the membrane. This chain is Putative membrane protein insertion efficiency factor, found in Kosmotoga olearia (strain ATCC BAA-1733 / DSM 21960 / TBF 19.5.1).